Consider the following 640-residue polypeptide: MLNQHTSSVPDDEHLQMAHQNSSSEVRNEAAVPDQLLTPLQPYTILLKDGETIATMYPIPAYPDLLPLGLLNFLLDEFNMEVEKGDSFPYYETLSLEEFKNVWFHNDGHVCIMVLGEIPELDYSMDTEADTNDNFGTEIETTKHTTQYKKRKERRNLNLSMQWEKQCLGIFDLKPAYPGRSAHVVTGTFLVNAGIRGKGIGKTLMETFIEWSKKLGFTSSFFPLIYGTNVGIRRILEGLNFRRIGKLPEAGILKGFDVPVDSFMYGKEFTHITKSIDLLRDPQKSIEIGKYERLKHFLETGKYPLHCDRNEKARLRVLSKTHSVLNGKLMTKGKEIIYDTDQQIQIALEIHLMEHLGINKVTSKIGEKYHWRGIKSTVSEVISRCQKCKMRYKDGTGVIIEQKRAVKQAHMLPTQHIETINNPRKSKKHDNALLGQAINFPQNIISSTLNDVEGEPTPPDTNIVQPTFQNATNSPATTAEANEANKRSEFLSSIQSTPLLDDEQSMNSFNRFVEEENSRKRRKYLDVASNGIVPHLTNNESQDHANPVNRDERDMNHSVPDLDRNDHTIMNDAMLSLEDNVMAALEMVQKEQQQKINHRGEDVTGQQIDLNNSEGNENSVTKIVNNESNTFTEHNSNIYY.

Positions 1–30 (MLNQHTSSVPDDEHLQMAHQNSSSEVRNEA) are disordered. The region spanning 121-259 (LDYSMDTEAD…AGILKGFDVP (139 aa)) is the N-acetyltransferase domain. Residues 534 to 565 (PHLTNNESQDHANPVNRDERDMNHSVPDLDRN) form a disordered region. The span at 549-565 (NRDERDMNHSVPDLDRN) shows a compositional bias: basic and acidic residues.

Required for normal transcription at a number of loci in yeast. Affects transcription at Ty1 elements, at PHO5, STE6 and ADH2. The polypeptide is Protein SPT10 (SPT10) (Saccharomyces cerevisiae (strain ATCC 204508 / S288c) (Baker's yeast)).